We begin with the raw amino-acid sequence, 627 residues long: 1-deoxy-D-xylulose-5-phosphate synthase (627 aa).

Thiamine diphosphate-binding positions include H74 and 115–117; that span reads GHA. D146 is a Mg(2+) binding site. Thiamine diphosphate is bound by residues 147-148, N175, F284, and E364; that span reads AA. Residue N175 coordinates Mg(2+).

Belongs to the transketolase family. DXPS subfamily. As to quaternary structure, homodimer. The cofactor is Mg(2+). It depends on thiamine diphosphate as a cofactor.

The enzyme catalyses D-glyceraldehyde 3-phosphate + pyruvate + H(+) = 1-deoxy-D-xylulose 5-phosphate + CO2. It participates in metabolic intermediate biosynthesis; 1-deoxy-D-xylulose 5-phosphate biosynthesis; 1-deoxy-D-xylulose 5-phosphate from D-glyceraldehyde 3-phosphate and pyruvate: step 1/1. In terms of biological role, catalyzes the acyloin condensation reaction between C atoms 2 and 3 of pyruvate and glyceraldehyde 3-phosphate to yield 1-deoxy-D-xylulose-5-phosphate (DXP). This Acidobacterium capsulatum (strain ATCC 51196 / DSM 11244 / BCRC 80197 / JCM 7670 / NBRC 15755 / NCIMB 13165 / 161) protein is 1-deoxy-D-xylulose-5-phosphate synthase.